Reading from the N-terminus, the 426-residue chain is Serine--tRNA ligase (426 aa).

The span at 41–60 (QTRTEQLQAERNARSKSIGQ) shows a compositional bias: polar residues. Residues 41–64 (QTRTEQLQAERNARSKSIGQAKQR) are disordered. Position 233–235 (233–235 (TAE)) interacts with L-serine. 264 to 266 (RSE) provides a ligand contact to ATP. L-serine is bound at residue Glu287. 351–354 (EISS) contributes to the ATP binding site. Residue Ser387 participates in L-serine binding.

It belongs to the class-II aminoacyl-tRNA synthetase family. Type-1 seryl-tRNA synthetase subfamily. Homodimer. The tRNA molecule binds across the dimer.

Its subcellular location is the cytoplasm. It catalyses the reaction tRNA(Ser) + L-serine + ATP = L-seryl-tRNA(Ser) + AMP + diphosphate + H(+). The catalysed reaction is tRNA(Sec) + L-serine + ATP = L-seryl-tRNA(Sec) + AMP + diphosphate + H(+). Its pathway is aminoacyl-tRNA biosynthesis; selenocysteinyl-tRNA(Sec) biosynthesis; L-seryl-tRNA(Sec) from L-serine and tRNA(Sec): step 1/1. Its function is as follows. Catalyzes the attachment of serine to tRNA(Ser). Is also able to aminoacylate tRNA(Sec) with serine, to form the misacylated tRNA L-seryl-tRNA(Sec), which will be further converted into selenocysteinyl-tRNA(Sec). This chain is Serine--tRNA ligase, found in Pseudomonas fluorescens (strain ATCC BAA-477 / NRRL B-23932 / Pf-5).